The primary structure comprises 148 residues: uncharacterized protein (148 aa).

The HTH asnC-type domain occupies 4–65 (LDRVDMQLVK…IPDIDKLGYM (62 aa)). The H-T-H motif DNA-binding region spans 23 to 42 (YRELADILNTTRQRIARRID).

This is an uncharacterized protein from Pyrococcus horikoshii (strain ATCC 700860 / DSM 12428 / JCM 9974 / NBRC 100139 / OT-3).